We begin with the raw amino-acid sequence, 557 residues long: Potassium-transporting ATPase potassium-binding subunit (557 aa).

A run of 12 helical transmembrane segments spans residues 5–25 (GFLLIATFLLVLMVLARPLGS), 63–83 (LCAILGLNMLGLAVLFFMLLG), 132–152 (GLTVQNFLSAASGIAVIFALI), 170–190 (LLRITLWVLVPVALVIALFFI), 253–273 (FVQMLAIFLIPTALCFAFGEV), 283–303 (LLWAMSVIFVICVGVVMWAEV), 329–349 (VLVSSLFAVVTTAASCGAVIA), 356–376 (ALGGMVPMWLMQIGEVVFGGV), 379–399 (GLYGMMLFVLLAVFIAGLMIG), 416–436 (LTALAILVTPTLVLMGAALAM), 484–504 (LLAFCMFVGRFGVIIPVMAIA), and 526–546 (LFVGLLIGTVLLVGALTFIPA).

Belongs to the KdpA family. In terms of assembly, the system is composed of three essential subunits: KdpA, KdpB and KdpC.

The protein resides in the cell inner membrane. Functionally, part of the high-affinity ATP-driven potassium transport (or Kdp) system, which catalyzes the hydrolysis of ATP coupled with the electrogenic transport of potassium into the cytoplasm. This subunit binds the periplasmic potassium ions and delivers the ions to the membrane domain of KdpB through an intramembrane tunnel. In Escherichia coli O157:H7, this protein is Potassium-transporting ATPase potassium-binding subunit.